The primary structure comprises 64 residues: Phylloxin-S1 (64 aa).

The signal sequence occupies residues 1–22 (MVFLKKSLLLVLFVGLVSLSIC). A propeptide spanning residues 23–44 (EENKREEHEEVEENAEKAEEKR) is cleaved from the precursor. At Gln-63 the chain carries Glutamine amide.

As to expression, expressed by the skin glands.

It is found in the secreted. Antimicrobial peptide against both Gram-positive and Gram-negative bacteria. This Phyllomedusa sauvagei (Sauvage's leaf frog) protein is Phylloxin-S1.